A 204-amino-acid chain; its full sequence is RNA-free ribonuclease P (204 aa).

It belongs to the HARP family.

The enzyme catalyses Endonucleolytic cleavage of RNA, removing 5'-extranucleotides from tRNA precursor.. RNA-free RNase P that catalyzes the removal of the 5'-leader sequence from pre-tRNA to produce the mature 5'-terminus. The polypeptide is RNA-free ribonuclease P (Pyrococcus abyssi (strain GE5 / Orsay)).